The following is a 711-amino-acid chain: Ribosomal RNA large subunit methyltransferase K/L (711 aa).

The THUMP domain occupies 43–154 (TLYRTLLWSR…RENLVISLDL (112 aa)).

It belongs to the methyltransferase superfamily. RlmKL family.

The protein localises to the cytoplasm. The enzyme catalyses guanosine(2445) in 23S rRNA + S-adenosyl-L-methionine = N(2)-methylguanosine(2445) in 23S rRNA + S-adenosyl-L-homocysteine + H(+). It catalyses the reaction guanosine(2069) in 23S rRNA + S-adenosyl-L-methionine = N(2)-methylguanosine(2069) in 23S rRNA + S-adenosyl-L-homocysteine + H(+). Functionally, specifically methylates the guanine in position 2445 (m2G2445) and the guanine in position 2069 (m7G2069) of 23S rRNA. The polypeptide is Ribosomal RNA large subunit methyltransferase K/L (Haemophilus influenzae (strain 86-028NP)).